A 362-amino-acid polypeptide reads, in one-letter code: Protein RecA (362 aa).

Gly-77 to Thr-84 is an ATP binding site.

This sequence belongs to the RecA family.

Its subcellular location is the cytoplasm. Its function is as follows. Can catalyze the hydrolysis of ATP in the presence of single-stranded DNA, the ATP-dependent uptake of single-stranded DNA by duplex DNA, and the ATP-dependent hybridization of homologous single-stranded DNAs. It interacts with LexA causing its activation and leading to its autocatalytic cleavage. This is Protein RecA from Nitrobacter winogradskyi (strain ATCC 25391 / DSM 10237 / CIP 104748 / NCIMB 11846 / Nb-255).